Reading from the N-terminus, the 543-residue chain is Neurofilament light polypeptide (543 aa).

S2 is subject to N-acetylserine. Residues 2 to 92 (SSFSYEPYYS…LKSIRTQEKA (91 aa)) form a head region. T21 is a glycosylation site (O-linked (GlcNAc) threonine). R23 is subject to Asymmetric dimethylarginine; alternate. Position 23 is an omega-N-methylarginine; alternate (R23). A glycan (O-linked (GlcNAc) serine) is linked at S27. R30 carries the post-translational modification Omega-N-methylarginine. Phosphotyrosine is present on Y43. Residues S56, S67, and S103 each carry the phosphoserine modification. In terms of domain architecture, IF rod spans 90 to 400 (EKAQLQDLND…KLLEGEETRL (311 aa)). Residues 93 to 124 (QLQDLNDRFASFIERVHELEQQNKVLEAELLV) form a coil 1A region. A linker 1 region spans residues 125–137 (LRQKHSEPSRFRA). Positions 138 to 234 (LYEQEIRDLR…KVHEEEIAEL (97 aa)) are coil 1B. The interval 235–252 (QAQIQYAQISVEMDVTKP) is linker 12. The segment at 253-271 (DLSAALKDIRAQYEKLAAK) is coil 2A. The linker 2 stretch occupies residues 272-280 (NMQNAEEWF). The tract at residues 281–396 (KSRFTVLTES…AAYRKLLEGE (116 aa)) is coil 2B. Residues 381-391 (ALDIEIAAYRK) form an epitope; recognized by IF-specific monoclonal antibody region. The tail, subdomain A stretch occupies residues 397-443 (ETRLSFTSVGSITSGYSQSSQVFGRSAYGGLQTSSYLMSTRSFPSYY). The tract at residues 397 to 543 (ETRLSFTSVG…GEEQAAKKKD (147 aa)) is tail. The tract at residues 444-543 (TSHVQEEQIE…GEEQAAKKKD (100 aa)) is tail, subdomain B (acidic). The segment at 462-543 (KAEEAKDEPP…GEEQAAKKKD (82 aa)) is disordered. Over residues 471–525 (PSEGEAEEEEKDKEEAEEEEAAEEEEAAKEESEEAKEEEEGGEGEEGEETKEAEE) the composition is skewed to acidic residues. Phosphoserine is present on residues S472 and S502. At T520 the chain carries Phosphothreonine. Basic and acidic residues predominate over residues 526 to 543 (EEKKVEGAGEEQAAKKKD).

Belongs to the intermediate filament family. In terms of assembly, forms homodimers (in vitro). Forms heterodimers with NEFH or NEFM; which can further hetero-oligomerize (in vitro). Forms heterodimers with INA (in vitro). Interacts with ARHGEF28. Interacts with TRIM2. O-glycosylated. In terms of processing, phosphorylated in the head and rod regions by the PKC kinase PKN1, leading to the inhibition of polymerization. Post-translationally, ubiquitinated in the presence of TRIM2 and UBE2D1.

It localises to the cell projection. The protein resides in the axon. The protein localises to the cytoplasm. It is found in the cytoskeleton. Its function is as follows. Neurofilaments usually contain three intermediate filament proteins: NEFL, NEFM, and NEFH which are involved in the maintenance of neuronal caliber. May additionally cooperate with the neuronal intermediate filament proteins PRPH and INA to form neuronal filamentous networks. This chain is Neurofilament light polypeptide (NEFL), found in Homo sapiens (Human).